The following is a 217-amino-acid chain: 3-demethoxyubiquinol 3-hydroxylase (217 aa).

Fe cation contacts are provided by E66, E96, H99, E148, E180, and H183.

This sequence belongs to the COQ7 family. It depends on Fe cation as a cofactor.

Its subcellular location is the cell membrane. The catalysed reaction is a 5-methoxy-2-methyl-3-(all-trans-polyprenyl)benzene-1,4-diol + AH2 + O2 = a 3-demethylubiquinol + A + H2O. It participates in cofactor biosynthesis; ubiquinone biosynthesis. Its function is as follows. Catalyzes the hydroxylation of 2-nonaprenyl-3-methyl-6-methoxy-1,4-benzoquinol during ubiquinone biosynthesis. The chain is 3-demethoxyubiquinol 3-hydroxylase from Xanthomonas axonopodis pv. citri (strain 306).